The chain runs to 661 residues: Acyl-coenzyme A oxidase acox-1.2 (661 aa).

FAD is bound by residues 147–150 (YAQT), 155–156 (GS), and glycine 189. Substrate contacts are provided by residues 283–286 (KIGY) and arginine 293. FAD contacts are provided by residues arginine 318 and 338–341 (QQHR). 4 residues coordinate ATP: histidine 340, serine 390, histidine 394, and glutamine 402. Glycine 409 contributes to the FAD binding site. Position 431 to 432 (431 to 432 (YE)) interacts with substrate. Residue glutamate 432 is the Proton acceptor of the active site. Glutamate 434 contributes to the FAD binding site. Residues 525 to 528 (RASR) and tyrosine 573 each bind ATP. The Microbody targeting signal motif lies at 659–661 (AKL).

The protein belongs to the acyl-CoA oxidase family. Homodimer. Forms a heterodimer with acox-1.1. It depends on FAD as a cofactor.

Its subcellular location is the peroxisome. The catalysed reaction is asc-omegaC5-CoA + O2 = asc-omegaDeltaC5-CoA + H2O2. It functions in the pathway lipid metabolism; peroxisomal fatty acid beta-oxidation. Activated by ATP. ATP binding leads to a conformational change that promotes FAD cofactor binding and enzyme activity. ATP binding likely occurs during acox-1.2 folding and/or dimer formation. The preference for processing substrates with shorter fatty acid chains is likely due to the closed conformation of the active site. In terms of biological role, involved in the first step of peroxisomal beta-oxidation by catalyzing the desaturation of fatty acid-derived side chains of ascaroside pheromones, which regulates development and behavior. Specifically, shortens ascarosides with 5-carbon omega side chain (asc-omega-C5). Does not shorten indol-3-carbonyl(IC)-ascaroside with 7-carbon or 9-carbon side chains. Does not catalyze the desaturation of fatty acids or hydroxylated fatty acids. This Caenorhabditis elegans protein is Acyl-coenzyme A oxidase acox-1.2.